We begin with the raw amino-acid sequence, 295 residues long: Nucleotide-binding protein BPUM_3115 (295 aa).

Glycine 16–threonine 23 serves as a coordination point for ATP. Aspartate 67 to glycine 70 is a GTP binding site.

This sequence belongs to the RapZ-like family.

Functionally, displays ATPase and GTPase activities. This is Nucleotide-binding protein BPUM_3115 from Bacillus pumilus (strain SAFR-032).